The following is a 591-amino-acid chain: Aspartate--tRNA(Asp/Asn) ligase (591 aa).

Residue Glu-175 participates in L-aspartate binding. Residues 199-202 (QQFK) form an aspartate region. L-aspartate is bound by residues Arg-221 and His-453. 221-223 (RDE) is an ATP binding site. Glu-486 contacts ATP. Arg-493 lines the L-aspartate pocket. 538-541 (GIDR) provides a ligand contact to ATP.

The protein belongs to the class-II aminoacyl-tRNA synthetase family. Type 1 subfamily. Homodimer.

It is found in the cytoplasm. The enzyme catalyses tRNA(Asx) + L-aspartate + ATP = L-aspartyl-tRNA(Asx) + AMP + diphosphate. Aspartyl-tRNA synthetase with relaxed tRNA specificity since it is able to aspartylate not only its cognate tRNA(Asp) but also tRNA(Asn). Reaction proceeds in two steps: L-aspartate is first activated by ATP to form Asp-AMP and then transferred to the acceptor end of tRNA(Asp/Asn). The protein is Aspartate--tRNA(Asp/Asn) ligase of Roseobacter denitrificans (strain ATCC 33942 / OCh 114) (Erythrobacter sp. (strain OCh 114)).